An 89-amino-acid chain; its full sequence is uncharacterized protein (89 aa).

The signal sequence occupies residues 1 to 19 (MQLTKTQFVRCVFLLLANS).

This is an uncharacterized protein from Sulfolobus islandicus filamentous virus (isolate Iceland/Hveragerdi) (SIFV).